The sequence spans 154 residues: 17.6 kDa class I heat shock protein (154 aa).

One can recognise a sHSP domain in the interval 40–154 (ETSAFANTRI…PDVKSIEISG (115 aa)).

It belongs to the small heat shock protein (HSP20) family. As to quaternary structure, forms oligomeric structures.

It is found in the cytoplasm. This chain is 17.6 kDa class I heat shock protein, found in Solanum peruvianum (Peruvian tomato).